The sequence spans 600 residues: Putative acetyltransferase MPN_114 (600 aa).

The active-site Proton acceptor is the histidine 323. Residue 396-409 (TKPLIKAKGIKNSE) participates in CoA binding.

The protein belongs to the carnitine/choline acetyltransferase family.

The protein is Putative acetyltransferase MPN_114 of Mycoplasma pneumoniae (strain ATCC 29342 / M129 / Subtype 1) (Mycoplasmoides pneumoniae).